The following is a 1121-amino-acid chain: Phosphatidylinositol 4-kinase beta 1 (1121 aa).

Residues 1-143 (MPMGRFLSLV…SRIQEKCQIA (143 aa)) enclose the PIK helical domain. Polar residues predominate over residues 187-207 (PPTQKSLSFSPSPGTNVQDDG). The disordered stretch occupies residues 187-210 (PPTQKSLSFSPSPGTNVQDDGSQL). Repeat copies occupy residues 212–231 (AEDN…RDAL), 244–263 (SEKE…EGDE), 266–285 (PNSE…EDED), 288–306 (NSSE…ESEE), 309–328 (SSSD…DEEE), 331–350 (ANSD…EDEE), 353–372 (PNSE…EDDK), 380–398 (EDKD…DDKR), and 420–438 (DERE…DDKK). Residues 212 to 508 (AEDNKIFKKL…FRDRDQSVED (297 aa)) form an 11 X 20 AA approximate repeats (PPC) region. Disordered stretches follow at residues 343-421 (ESKN…EEDE), 435-489 (DDKK…ESSP), 506-544 (VEDS…NTAS), and 794-825 (AAAA…NGGM). 4 stretches are compositionally biased toward basic and acidic residues: residues 358–376 (FFKK…VPKE), 383–405 (DGFL…EKNE), 412–421 (ADKKSGEEDE), and 435–445 (DDKKDIVKVDD). A compositionally biased stretch (acidic residues) spans 446–455 (GNESEGDESP). Phosphoserine is present on residues Ser-449 and Ser-454. Tandem repeats lie at residues 454-472 (SPEF…EDAK) and 489-508 (PGTE…SVED). Residues 466-475 (IHPEDAKPTS) are compositionally biased toward basic and acidic residues. Over residues 476 to 489 (ENENSSNGLVESSP) the composition is skewed to polar residues. Residues 835-1106 (ELWEGKRDRI…LISSSLDAWR (272 aa)) form the PI3K/PI4K catalytic domain. The interval 841 to 847 (RDRIRKA) is G-loop. The segment at 969–977 (QVKDRHNGN) is catalytic loop. The activation loop stretch occupies residues 988–1012 (HIDFGFMLSNSPGGVNFESAPFKLT).

This sequence belongs to the PI3/PI4-kinase family. Type III PI4K subfamily. Interacts with AHK2, CBL1 and RABA4D. In terms of tissue distribution, expressed constitutively in leaves, roots, flowers, and stems.

It is found in the cell membrane. The protein resides in the golgi apparatus. It localises to the trans-Golgi network. The protein localises to the cytoplasmic vesicle membrane. The enzyme catalyses a 1,2-diacyl-sn-glycero-3-phospho-(1D-myo-inositol) + ATP = a 1,2-diacyl-sn-glycero-3-phospho-(1D-myo-inositol 4-phosphate) + ADP + H(+). With respect to regulation, stimulated by phosphatidylinositol 4-phosphate (PtdIns4P). Slightly repressed by phosphatidyl-choline (PtdCho), wortmannin and adenosine. Functionally, acts on phosphatidylinositol (PtdIns) in the first committed step in the production of the second messenger inositol-1,4,5-trisphosphate. Necessary for proper organization of the trans-Golgi network (TGN) and post-Golgi secretion in root hairs. Together with PI4KB2, required during polarized root hair expansion and pollen tube elongation. Functions redundantly with PI4KB2 upstream of the cold response phosphoinositide-dependent phospholipase C (PI-PLC) pathway. The protein is Phosphatidylinositol 4-kinase beta 1 of Arabidopsis thaliana (Mouse-ear cress).